Here is a 125-residue protein sequence, read N- to C-terminus: Large ribosomal subunit protein bL12 (125 aa).

It belongs to the bacterial ribosomal protein bL12 family. Homodimer. Part of the ribosomal stalk of the 50S ribosomal subunit. Forms a multimeric L10(L12)X complex, where L10 forms an elongated spine to which 2 to 4 L12 dimers bind in a sequential fashion. Binds GTP-bound translation factors.

Functionally, forms part of the ribosomal stalk which helps the ribosome interact with GTP-bound translation factors. Is thus essential for accurate translation. This is Large ribosomal subunit protein bL12 from Porphyromonas gingivalis (strain ATCC 33277 / DSM 20709 / CIP 103683 / JCM 12257 / NCTC 11834 / 2561).